A 340-amino-acid polypeptide reads, in one-letter code: tRNA N6-adenosine threonylcarbamoyltransferase (340 aa).

His-111 and His-115 together coordinate Fe cation. Substrate contacts are provided by residues 134–138, Asp-167, Gly-180, and Asn-276; that span reads LVSGG. Asp-304 serves as a coordination point for Fe cation.

Belongs to the KAE1 / TsaD family. It depends on Fe(2+) as a cofactor.

Its subcellular location is the cytoplasm. The enzyme catalyses L-threonylcarbamoyladenylate + adenosine(37) in tRNA = N(6)-L-threonylcarbamoyladenosine(37) in tRNA + AMP + H(+). Functionally, required for the formation of a threonylcarbamoyl group on adenosine at position 37 (t(6)A37) in tRNAs that read codons beginning with adenine. Is involved in the transfer of the threonylcarbamoyl moiety of threonylcarbamoyl-AMP (TC-AMP) to the N6 group of A37, together with TsaE and TsaB. TsaD likely plays a direct catalytic role in this reaction. In Helicobacter pylori (strain Shi470), this protein is tRNA N6-adenosine threonylcarbamoyltransferase.